The primary structure comprises 302 residues: Glycine--tRNA ligase alpha subunit (302 aa).

Belongs to the class-II aminoacyl-tRNA synthetase family. As to quaternary structure, tetramer of two alpha and two beta subunits.

It localises to the cytoplasm. It carries out the reaction tRNA(Gly) + glycine + ATP = glycyl-tRNA(Gly) + AMP + diphosphate. The sequence is that of Glycine--tRNA ligase alpha subunit from Xanthomonas oryzae pv. oryzae (strain PXO99A).